Reading from the N-terminus, the 620-residue chain is KIF-binding protein (620 aa).

Coiled coils occupy residues 30–64 and 133–169; these read YKSKYEAIELLVKELKKEINENEKELNQQQQQDIL and LIKSENLINQTIEKQQEQEQEQEQQFKDKLESLQLQN.

This sequence belongs to the KIF-binding protein family.

It is found in the cytoplasm. The protein localises to the cytoskeleton. Activator of KIF1B plus-end-directed microtubule motor activity. Required for organization of axonal microtubules, and axonal outgrowth and maintenance during peripheral and central nervous system development. This chain is KIF-binding protein (kifbp), found in Dictyostelium discoideum (Social amoeba).